The chain runs to 702 residues: Vacuolar protein sorting-associated protein 52 homolog (702 aa).

Residues 505–535 (KEMGAKMEAVLENSEDSIEQLLTRMSAMQQT) adopt a coiled-coil conformation.

Belongs to the VPS52 family. Component of the Golgi-associated retrograde protein (GARP) complex, also called VFT (VPS fifty-three) complex, composed of vps-51, vps-52, vps-53 and vps-54. Within the complex interacts with vps-53 and vps-54. Interacts with the small GTPases rab-6.1 and rab-6.2. Ubiquitously expressed, with particularly strong expression in neuronal cells. Specifically expressed in head and tail neurons and in the pharynx and ventral cord motor neurons.

It localises to the golgi apparatus. It is found in the trans-Golgi network. Its subcellular location is the perikaryon. The protein resides in the cytoplasm. The protein localises to the perinuclear region. In terms of biological role, acts as a component of the GARP complex that is involved in retrograde transport from early and late endosomes to the trans-Golgi network (TGN). The GARP complex facilitates tethering as well as SNARE complex assembly at the Golgi. Plays a role in the trafficking of cargo to dense-core vesicles, probably through association with the EARP-interacting protein eipr-1. Important for neuronal function. This chain is Vacuolar protein sorting-associated protein 52 homolog, found in Caenorhabditis elegans.